Consider the following 231-residue polypeptide: Phosphoglycolate phosphatase (231 aa).

Asp9 serves as the catalytic Nucleophile. Mg(2+)-binding residues include Asp9 and Asp11. Asp11 serves as the catalytic Proton donor. Lys154 is a substrate binding site. Residues Asp177 and Asp181 each contribute to the Mg(2+) site.

This sequence belongs to the archaeal SPP-like hydrolase family. As to quaternary structure, homodimer. Mg(2+) is required as a cofactor.

The catalysed reaction is 2-phosphoglycolate + H2O = glycolate + phosphate. Catalyzes the dephosphorylation of 2-phosphoglycolate. Has phosphatase activity towards p-nitrophenylphosphate (in vitro). The protein is Phosphoglycolate phosphatase of Pyrococcus horikoshii (strain ATCC 700860 / DSM 12428 / JCM 9974 / NBRC 100139 / OT-3).